Consider the following 485-residue polypeptide: Glutamyl-tRNA(Gln) amidotransferase subunit A (485 aa).

Catalysis depends on charge relay system residues Lys76 and Ser151. Residue Ser175 is the Acyl-ester intermediate of the active site.

Belongs to the amidase family. GatA subfamily. In terms of assembly, heterotrimer of A, B and C subunits.

It carries out the reaction L-glutamyl-tRNA(Gln) + L-glutamine + ATP + H2O = L-glutaminyl-tRNA(Gln) + L-glutamate + ADP + phosphate + H(+). In terms of biological role, allows the formation of correctly charged Gln-tRNA(Gln) through the transamidation of misacylated Glu-tRNA(Gln) in organisms which lack glutaminyl-tRNA synthetase. The reaction takes place in the presence of glutamine and ATP through an activated gamma-phospho-Glu-tRNA(Gln). This is Glutamyl-tRNA(Gln) amidotransferase subunit A from Methylococcus capsulatus (strain ATCC 33009 / NCIMB 11132 / Bath).